The chain runs to 364 residues: Coproporphyrin III ferrochelatase (364 aa).

Residues R29 and Y118 each contribute to the Fe-coproporphyrin III site. The Fe(2+) site is built by H169 and E250.

This sequence belongs to the ferrochelatase family.

The protein resides in the cytoplasm. The catalysed reaction is Fe-coproporphyrin III + 2 H(+) = coproporphyrin III + Fe(2+). It participates in porphyrin-containing compound metabolism; protoheme biosynthesis. Functionally, involved in coproporphyrin-dependent heme b biosynthesis. Catalyzes the insertion of ferrous iron into coproporphyrin III to form Fe-coproporphyrin III. The polypeptide is Coproporphyrin III ferrochelatase (Streptococcus pneumoniae (strain Taiwan19F-14)).